The sequence spans 299 residues: Regucalcin (299 aa).

Glutamate 18 contacts a divalent metal cation. The substrate site is built by arginine 101, asparagine 103, and glutamate 121. Positions 154 and 204 each coordinate a divalent metal cation. Aspartate 204 acts as the Proton donor/acceptor in catalysis.

This sequence belongs to the SMP-30/CGR1 family. Requires Zn(2+) as cofactor. The cofactor is Mn(2+). It depends on Ca(2+) as a cofactor. Mg(2+) serves as cofactor.

The protein localises to the cytoplasm. The catalysed reaction is D-glucono-1,5-lactone + H2O = D-gluconate + H(+). It participates in cofactor biosynthesis; L-ascorbate biosynthesis via UDP-alpha-D-glucuronate pathway; L-ascorbate from UDP-alpha-D-glucuronate: step 3/4. Gluconolactonase with low activity towards other sugar lactones, including gulonolactone and galactonolactone. Catalyzes a key step in ascorbic acid (vitamin C) biosynthesis. Can also hydrolyze diisopropyl phosphorofluoridate and phenylacetate (in vitro). Calcium-binding protein. Modulates Ca(2+) signaling, and Ca(2+)-dependent cellular processes and enzyme activities. The protein is Regucalcin of Gallus gallus (Chicken).